Reading from the N-terminus, the 277-residue chain is Inositol monophosphatase 1 (277 aa).

Glu-70, Asp-90, Ile-92, and Asp-93 together coordinate Mg(2+). Glu-70 is a binding site for substrate. A substrate-binding site is contributed by 92 to 95 (IDGT). Thr-168 is modified (phosphothreonine). Substrate-binding positions include 194–196 (GTA), Glu-213, and Asp-220. Residue Asp-220 coordinates Mg(2+).

It belongs to the inositol monophosphatase superfamily. Homodimer. It depends on Mg(2+) as a cofactor.

It localises to the cytoplasm. It carries out the reaction a myo-inositol phosphate + H2O = myo-inositol + phosphate. The catalysed reaction is 1D-myo-inositol 1-phosphate + H2O = myo-inositol + phosphate. It catalyses the reaction 1D-myo-inositol 2-phosphate + H2O = myo-inositol + phosphate. The enzyme catalyses 1D-myo-inositol 3-phosphate + H2O = myo-inositol + phosphate. It carries out the reaction 1D-myo-inositol 4-phosphate + H2O = myo-inositol + phosphate. The catalysed reaction is 1D-myo-inositol 5-phosphate + H2O = myo-inositol + phosphate. It catalyses the reaction 1D-myo-inositol 6-phosphate + H2O = myo-inositol + phosphate. The enzyme catalyses scyllo-inositol 1-phosphate + H2O = scyllo-inositol + phosphate. It carries out the reaction alpha-D-galactose 1-phosphate + H2O = D-galactose + phosphate. The catalysed reaction is alpha-D-glucose 1-phosphate + H2O = D-glucose + phosphate. It catalyses the reaction D-glucose 6-phosphate + H2O = D-glucose + phosphate. The enzyme catalyses beta-D-fructose 1-phosphate + H2O = D-fructose + phosphate. It carries out the reaction glycerol 2-phosphate + H2O = glycerol + phosphate. The catalysed reaction is adenosine 2'-phosphate + H2O = adenosine + phosphate. The protein operates within polyol metabolism; myo-inositol biosynthesis; myo-inositol from D-glucose 6-phosphate: step 2/2. Its activity is regulated as follows. Inhibited by Li(+), Ca(2+) and Mn(2+), but also by Mg(2+) at concentrations above 3 mM. Its function is as follows. Phosphatase involved in the dephosphorylation of myo-inositol monophosphate to generate myo-inositol. Is also able to dephosphorylate scyllo-inositol-phosphate, myo-inositol 1,4-diphosphate, scyllo-inositol-1,3-diphosphate and scyllo-inositol-1,4-diphosphate. Also dephosphorylates in vitro other sugar-phosphates including D-galactose-1-phosphate, glucose-1-phosphate, glucose-6-phosphate, fructose-1-phosphate, beta-glycerophosphate and 2'-AMP. Responsible for the provision of inositol required for synthesis of phosphatidylinositol and polyphosphoinositides, and involved in maintaining normal brain function. Has been implicated as the pharmacological target for lithium Li(+) action in brain. In Sus scrofa (Pig), this protein is Inositol monophosphatase 1 (IMPA1).